We begin with the raw amino-acid sequence, 159 residues long: Phosphopantetheine adenylyltransferase (159 aa).

Thr-10 lines the substrate pocket. Residues 10-11 (TF) and His-18 each bind ATP. Lys-42, Met-74, and Arg-88 together coordinate substrate. ATP contacts are provided by residues 89–91 (GLR), Glu-99, and 124–130 (WSFISSS).

It belongs to the bacterial CoaD family. Homohexamer. It depends on Mg(2+) as a cofactor.

It localises to the cytoplasm. The catalysed reaction is (R)-4'-phosphopantetheine + ATP + H(+) = 3'-dephospho-CoA + diphosphate. It participates in cofactor biosynthesis; coenzyme A biosynthesis; CoA from (R)-pantothenate: step 4/5. Functionally, reversibly transfers an adenylyl group from ATP to 4'-phosphopantetheine, yielding dephospho-CoA (dPCoA) and pyrophosphate. The chain is Phosphopantetheine adenylyltransferase from Escherichia fergusonii (strain ATCC 35469 / DSM 13698 / CCUG 18766 / IAM 14443 / JCM 21226 / LMG 7866 / NBRC 102419 / NCTC 12128 / CDC 0568-73).